The chain runs to 290 residues: 33 kDa chaperonin (290 aa).

2 disulfide bridges follow: Cys-235-Cys-237 and Cys-268-Cys-271.

This sequence belongs to the HSP33 family. In terms of processing, under oxidizing conditions two disulfide bonds are formed involving the reactive cysteines. Under reducing conditions zinc is bound to the reactive cysteines and the protein is inactive.

Its subcellular location is the cytoplasm. Redox regulated molecular chaperone. Protects both thermally unfolding and oxidatively damaged proteins from irreversible aggregation. Plays an important role in the bacterial defense system toward oxidative stress. The polypeptide is 33 kDa chaperonin (Streptococcus equi subsp. equi (strain 4047)).